A 415-amino-acid chain; its full sequence is Lipoyl synthase, mitochondrial (415 aa).

A mitochondrion-targeting transit peptide spans 1-32; that stretch reads MAASTNRLRFLYSSARTVPQTGSITPISRRTY. Residues 20 to 32 are compositionally biased toward polar residues; that stretch reads QTGSITPISRRTY. The interval 20–53 is disordered; that stretch reads QTGSITPISRRTYATTEPSPSATGAPATARKRTN. Over residues 33–47 the composition is skewed to low complexity; it reads ATTEPSPSATGAPAT. [4Fe-4S] cluster is bound by residues Cys132, Cys137, Cys143, Cys163, Cys167, Cys170, and Ser378. Positions 146-367 constitute a Radical SAM core domain; the sequence is GSDKSAATAT…RQRALDMGFL (222 aa). Residues 395–415 form a disordered region; that stretch reads AAGTAGESVTDSKAAVDEATR.

Belongs to the radical SAM superfamily. Lipoyl synthase family. [4Fe-4S] cluster serves as cofactor.

The protein localises to the mitochondrion. The enzyme catalyses [[Fe-S] cluster scaffold protein carrying a second [4Fe-4S](2+) cluster] + N(6)-octanoyl-L-lysyl-[protein] + 2 oxidized [2Fe-2S]-[ferredoxin] + 2 S-adenosyl-L-methionine + 4 H(+) = [[Fe-S] cluster scaffold protein] + N(6)-[(R)-dihydrolipoyl]-L-lysyl-[protein] + 4 Fe(3+) + 2 hydrogen sulfide + 2 5'-deoxyadenosine + 2 L-methionine + 2 reduced [2Fe-2S]-[ferredoxin]. Its pathway is protein modification; protein lipoylation via endogenous pathway; protein N(6)-(lipoyl)lysine from octanoyl-[acyl-carrier-protein]: step 2/2. In terms of biological role, catalyzes the radical-mediated insertion of two sulfur atoms into the C-6 and C-8 positions of the octanoyl moiety bound to the lipoyl domains of lipoate-dependent enzymes, thereby converting the octanoylated domains into lipoylated derivatives. The chain is Lipoyl synthase, mitochondrial from Aspergillus flavus (strain ATCC 200026 / FGSC A1120 / IAM 13836 / NRRL 3357 / JCM 12722 / SRRC 167).